The following is a 1042-amino-acid chain: Exosome RNA helicase MTR4 (1042 aa).

At Ala2 the chain carries N-acetylalanine. The tract at residues 16 to 74 (DSTTAAGTKKDKEKDKGKWKGPPGSADKAGKRFDGKLQSESTNNGKNKRDVDFEGTDEP) is disordered. Positions 23-33 (TKKDKEKDKGK) are enriched in basic and acidic residues. Lys24 is covalently cross-linked (Glycyl lysine isopeptide (Lys-Gly) (interchain with G-Cter in SUMO2)). Ser40 bears the Phosphoserine mark. A compositionally biased stretch (basic and acidic residues) spans 43–52 (KAGKRFDGKL). Lys51 and Lys78 each carry N6-acetyllysine. Residues Ile139, 161 to 168 (AHTSAGKT), Ser164, Gly166, Lys167, and Thr168 contribute to the ATP site. The Helicase ATP-binding domain maps to 148 to 304 (IQCVDNNQSV…WICHLHKQPC (157 aa)). The short motif at 252–255 (DEIH) is the DEIH box element. Lys358 is covalently cross-linked (Glycyl lysine isopeptide (Lys-Gly) (interchain with G-Cter in SUMO2)). Residues 405-577 (QMTKLDFNTD…NMVLNLLRVE (173 aa)) enclose the Helicase C-terminal domain. Glycyl lysine isopeptide (Lys-Gly) (interchain with G-Cter in SUMO2) cross-links involve residues Lys684 and Lys723.

Belongs to the helicase family. SKI2 subfamily. Component of a TRAMP-like complex, an ATP-dependent exosome regulatory complex consisting of a helicase (MTREX), an oligadenylate polymerase (TENT4B or TENT4A), and a substrate specific RNA-binding factor (ZCCHC7 or ZCCHC8). Several TRAMP-like complexes exist with specific compositions and are associated with nuclear, or nucleolar RNA exosomes. Identified in the spliceosome C complex. Component of the poly(A) tail exosome targeting (PAXT) complex made of PABPN1, ZFC3H1 and MTREX that directs a subset of long and polyadenylated poly(A) RNAs for exosomal degradation. Component of the nuclear exosome targeting (NEXT) complex composed of MTREX, ZCCHC8, and RBM7 that directs a subset of non-coding short-lived RNAs for exosomal degradation. Interacts with ZCCHC8; this interaction bridges the interaction between RBM7 and MTREX. Binds to ZFC3H1 and RBM7 in a RNase-insensitive manner. Interacts with EXOSC10; the interaction mediates the association of MTREX with nuclear RNA exosomes. Interacts with isoform 1 of NVL in an ATP-dependent manner; the interaction is required to associate NVL with nuclear RNA exosome. Interacts with WDR74; the interaction dissociation in a late stage of rRNA synthesis is required for appropriate maturation of pre-60S particles and depends on the ATPase activity of NVL. Interacts with MPHOSPH6. Interacts with the RNA cap-binding complex proteins NCBP1 and SRRT. Interacts with NRDE2; the interaction is direct and negatively regulates MTREX function in exosomal degradation by changing its conformation precluding interaction with ZFC3H1, the RNA cap-binding complex proteins NCBP1 and SRRT, and association with the exosome. Associates with the RNA exosome complex.

It is found in the nucleus. The protein localises to the nucleoplasm. Its subcellular location is the nucleolus. The protein resides in the nucleus speckle. It catalyses the reaction ATP + H2O = ADP + phosphate + H(+). With respect to regulation, activated when MTREX is incorporated into NEXT complex an the nuclear RNA exosome complex. Its function is as follows. Catalyzes the ATP-dependent unwinding of RNA duplexes with a single-stranded 3' RNA extension. Central subunit of many protein complexes, namely TRAMP-like, nuclear exosome targeting (NEXT) and poly(A) tail exosome targeting (PAXT). NEXT functions as an RNA exosome cofactor that directs a subset of non-coding short-lived RNAs for exosomal degradation. NEXT is involved in surveillance and turnover of aberrant transcripts and non-coding RNAs. PAXT directs a subset of long and polyadenylated poly(A) RNAs for exosomal degradation. The RNA exosome is fundamental for the degradation of RNA in eukaryotic nuclei. Substrate targeting is facilitated by its cofactor ZCCHC8, which links to RNA-binding protein adapters. Associated with the RNA exosome complex and involved in the 3'-processing of the 7S pre-RNA to the mature 5.8S rRNA. May be involved in pre-mRNA splicing. In the context of NEXT complex can also in vitro unwind DNA:RNA heteroduplexes with a 3' poly (A) RNA tracking strand. Can promote unwinding and degradation of structured RNA substrates when associated with the nuclear exosome and its cofactors. Can displace a DNA strand while translocating on RNA to ultimately degrade the RNA within a DNA/RNA heteroduplex. Plays a role in DNA damage response. This chain is Exosome RNA helicase MTR4, found in Homo sapiens (Human).